We begin with the raw amino-acid sequence, 129 residues long: Small ribosomal subunit protein uS11 (129 aa).

The protein belongs to the universal ribosomal protein uS11 family. In terms of assembly, part of the 30S ribosomal subunit. Interacts with proteins S7 and S18. Binds to IF-3.

Located on the platform of the 30S subunit, it bridges several disparate RNA helices of the 16S rRNA. Forms part of the Shine-Dalgarno cleft in the 70S ribosome. This chain is Small ribosomal subunit protein uS11, found in Azotobacter vinelandii (strain DJ / ATCC BAA-1303).